A 396-amino-acid chain; its full sequence is MGERKGVNKYYPPDFNPEKHGSLNRYHNSHPLRERARKLSQGILIIRFEMPYNIWCDGCKNHIGMGVRYNAEKKKVGNYYTTPIYRFRMKCHLCVNYIEMQTDPANCDYVIVSGAQRKEERWDMADNEQVLTTEHEKKQKLETDAMFRLEHGEADRSTLKKALPTLSHIQEAQSAWKDDFALNSMLRRRFREKKKAIQEEEERDQALQAKASLTIPLVPETEDDRKLAALLKFHTLDSYEDKQKLKRTEIISRSWFPSAPGSASSSKVSGVLKKLAQSRRTALATSPITVGDLGIVRRRSRDVPESPQHAADTPKSGEPRVPEEAAQDRPMSPGDCPPETTETPKCSSPRGQEGSRQDKPLSPAGSSQEAADTPDTRHPCSLGSSLVADYSDSESE.

Residues 1–26 (MGERKGVNKYYPPDFNPEKHGSLNRY) are disordered. Residue Ser-40 is modified to Phosphoserine. The stretch at 182-214 (LNSMLRRRFREKKKAIQEEEERDQALQAKASLT) forms a coiled coil. The segment at 295–396 (IVRRRSRDVP…VADYSDSESE (102 aa)) is disordered. At Ser-306 the chain carries Phosphoserine. Over residues 315-327 (KSGEPRVPEEAAQ) the composition is skewed to basic and acidic residues. Over residues 340 to 350 (TTETPKCSSPR) the composition is skewed to polar residues. Phosphoserine is present on Ser-362.

It belongs to the CWC16 family.

Its subcellular location is the nucleus. Functionally, may be involved in mRNA splicing. The protein is Probable splicing factor YJU2B of Homo sapiens (Human).